Here is a 294-residue protein sequence, read N- to C-terminus: Cytidine deaminase (294 aa).

CMP/dCMP-type deaminase domains follow at residues 48–168 (DEDA…FGPK) and 186–294 (LTGD…VLLG). 89–91 (NME) lines the substrate pocket. A Zn(2+)-binding site is contributed by H102. The active-site Proton donor is the E104. Positions 129 and 132 each coordinate Zn(2+).

This sequence belongs to the cytidine and deoxycytidylate deaminase family. Homodimer. The cofactor is Zn(2+).

It catalyses the reaction cytidine + H2O + H(+) = uridine + NH4(+). It carries out the reaction 2'-deoxycytidine + H2O + H(+) = 2'-deoxyuridine + NH4(+). Functionally, this enzyme scavenges exogenous and endogenous cytidine and 2'-deoxycytidine for UMP synthesis. The chain is Cytidine deaminase from Salmonella paratyphi A (strain ATCC 9150 / SARB42).